Here is a 551-residue protein sequence, read N- to C-terminus: MSNEDILVPAALSTHQDESDFTFQKFDSDSMERSFYLGPLSSQDELWDKLMQYYSIDKLIAYLQRNPEYVQITLQFPDTLVKDSSFIIRALQDKLDGDGAGRKFWALADTAYSACCVDEVAAEHVKGDLVIHFGDACLNAIQKLPVVYDFGKPFLDTDVLLACFTEEFKDKDQKICLMSNASYTHHIPDLYSRLKSNGYTNVVYSVVNTGLLTETAEIIDNTTPLSDTDELFTLGNRVLMGARQEEDIDEETLRNEYALFHITMPHDPHLLYLTTVFESIHTYDVADQVISNGPYPSLTRRYKNMHKARTAGCIGILVNTLSIRGTRETVNKLIKLIRENGKKHYLFVVGKPNVPKLANFEPVDIWCILGCGQSGIIVDEFGEFYKPIITPYELTLALNFEVTWTGKWIIDFQKAITEIDNSLAELGIDDSKHGNDSDHDLDAPEFDAVTGKYVSSSRPLRALNHLQLDAPSNEDKQVMARVNGGTVIKGTVSTAVEHLANRAWTGLGSDYKDDEGYEEDGATVEEGISGIARGYEFDQEDAARKSQNQSQ.

3 residues coordinate [4Fe-4S] cluster: Cys-116, Cys-137, and Cys-371.

This sequence belongs to the DPH1/DPH2 family. DPH2 subfamily. Component of the 2-(3-amino-3-carboxypropyl)histidine synthase complex composed of DPH1, DPH2, DPH3 and a NADH-dependent reductase, predominantly CBR1. The cofactor is [4Fe-4S] cluster.

It localises to the cytoplasm. Its pathway is protein modification; peptidyl-diphthamide biosynthesis. Its function is as follows. Required for the first step of diphthamide biosynthesis, a post-translational modification of histidine which occurs in elongation factor 2. DPH1 and DPH2 transfer a 3-amino-3-carboxypropyl (ACP) group from S-adenosyl-L-methionine (SAM) to a histidine residue, the reaction is assisted by a reduction system comprising DPH3 and a NADH-dependent reductase, predominantly CBR1. Facilitates the reduction of the catalytic iron-sulfur cluster found in the DPH1 subunit. The polypeptide is 2-(3-amino-3-carboxypropyl)histidine synthase subunit 2 (DPH2) (Candida glabrata (strain ATCC 2001 / BCRC 20586 / JCM 3761 / NBRC 0622 / NRRL Y-65 / CBS 138) (Yeast)).